The primary structure comprises 97 residues: Class II hydrophobin 1 (97 aa).

A signal peptide spans 1-16 (MKFFAIAALFAAAAVA). A propeptide spanning residues 17 to 22 (QPLEDR) is cleaved from the precursor. Intrachain disulfides connect C30-C79, C40-C70, C41-C53, and C80-C91.

It belongs to the cerato-ulmin hydrophobin family. Homotetramer. Further self-assembles to form highly ordered films at water-air interfaces through intermolecular interactions.

Its subcellular location is the secreted. The protein localises to the cell wall. Functionally, aerial growth, conidiation, and dispersal of filamentous fungi in the environment rely upon a capability of their secreting small amphipathic proteins called hydrophobins (HPBs) with low sequence identity. Class I can self-assemble into an outermost layer of rodlet bundles on aerial cell surfaces, conferring cellular hydrophobicity that supports fungal growth, development and dispersal; whereas Class II form highly ordered films at water-air interfaces through intermolecular interactions but contribute nothing to the rodlet structure. Hbf1 is a class II hydrophobin that has a role in hyphal development and is in particular required for the formation of aerial hyphae. In Hypocrea jecorina (Trichoderma reesei), this protein is Class II hydrophobin 1.